The primary structure comprises 312 residues: Very-long-chain 3-oxoacyl-CoA reductase (312 aa).

The chain crosses the membrane as a helical span at residues 4–24; the sequence is ALPAAGFLYWVGASTIAYLTL. Residue 50 to 79 coordinates NADP(+); it reads GEWAVVTGGTDGIGKSYAEELAKRGMKIVL. Helical transmembrane passes span 182–202 and 271–291; these read GVIL…LTVY and GYVI…WIYF. S189 serves as a coordination point for substrate. Y202 (proton acceptor) is an active-site residue. Positions 308 to 312 match the Di-lysine motif motif; sequence KTKKN.

Belongs to the short-chain dehydrogenases/reductases (SDR) family. 17-beta-HSD 3 subfamily.

It is found in the endoplasmic reticulum membrane. The catalysed reaction is a very-long-chain (3R)-3-hydroxyacyl-CoA + NADP(+) = a very-long-chain 3-oxoacyl-CoA + NADPH + H(+). It carries out the reaction 17beta-estradiol + NAD(+) = estrone + NADH + H(+). The enzyme catalyses 17beta-estradiol + NADP(+) = estrone + NADPH + H(+). It catalyses the reaction 3-oxooctadecanoyl-CoA + NADPH + H(+) = (3R)-hydroxyoctadecanoyl-CoA + NADP(+). The catalysed reaction is (7Z,10Z,13Z,16Z)-3-oxodocosatetraenoyl-CoA + NADPH + H(+) = (3R)-hydroxy-(7Z,10Z,13Z,16Z)-docosatetraenoyl-CoA + NADP(+). It carries out the reaction 3-oxo-(7Z,10Z,13Z,16Z,19Z)-docosapentaenoyl-CoA + NADPH + H(+) = (3R)-hydroxy-(7Z,10Z,13Z,16Z,19Z)-docosapentaenoyl-CoA + NADP(+). The enzyme catalyses (8Z,11Z,14Z)-3-oxoeicosatrienoyl-CoA + NADPH + H(+) = (3R)-hydroxy-(8Z,11Z,14Z)-eicosatrienoyl-CoA + NADP(+). Its pathway is lipid metabolism; fatty acid biosynthesis. It functions in the pathway steroid biosynthesis; estrogen biosynthesis. Its function is as follows. Catalyzes the second of the four reactions of the long-chain fatty acids elongation cycle. This endoplasmic reticulum-bound enzymatic process, allows the addition of two carbons to the chain of long- and very long-chain fatty acids/VLCFAs per cycle. This enzyme has a 3-ketoacyl-CoA reductase activity, reducing 3-ketoacyl-CoA to 3-hydroxyacyl-CoA, within each cycle of fatty acid elongation. Thereby, it may participate in the production of VLCFAs of different chain lengths that are involved in multiple biological processes as precursors of membrane lipids and lipid mediators. May also catalyze the transformation of estrone (E1) into estradiol (E2) and play a role in estrogen formation. This Rattus norvegicus (Rat) protein is Very-long-chain 3-oxoacyl-CoA reductase.